The primary structure comprises 208 residues: Uracil phosphoribosyltransferase (208 aa).

5-phospho-alpha-D-ribose 1-diphosphate-binding positions include arginine 78, arginine 103, and 130–138 (DPMLATANS). Uracil is bound by residues isoleucine 193 and 198 to 200 (GDA). Aspartate 199 provides a ligand contact to 5-phospho-alpha-D-ribose 1-diphosphate.

This sequence belongs to the UPRTase family. Requires Mg(2+) as cofactor.

The catalysed reaction is UMP + diphosphate = 5-phospho-alpha-D-ribose 1-diphosphate + uracil. Its pathway is pyrimidine metabolism; UMP biosynthesis via salvage pathway; UMP from uracil: step 1/1. With respect to regulation, allosterically activated by GTP. Its function is as follows. Catalyzes the conversion of uracil and 5-phospho-alpha-D-ribose 1-diphosphate (PRPP) to UMP and diphosphate. This is Uracil phosphoribosyltransferase from Brucella abortus biovar 1 (strain 9-941).